Consider the following 202-residue polypeptide: MVGSFVFEAELRHQLGKGASRRLRHAGKVPAVLYGGGGEPVSLLLDHHKVVKNLENEATYSHVLTIRFDGREENAILKAVQRHPAKPVVMHLDFQRVSAADKIRVHVPLHFINQESSVGVKKGGVVSHGMVDVEVDCLPKDLPEYIEVDLAQVDIGGIIHLSDLKLPAGVEIHALAQGVGHDLPVASVHAPRTAEGGEGGAG.

It belongs to the bacterial ribosomal protein bL25 family. CTC subfamily. Part of the 50S ribosomal subunit; part of the 5S rRNA/L5/L18/L25 subcomplex. Contacts the 5S rRNA. Binds to the 5S rRNA independently of L5 and L18.

This is one of the proteins that binds to the 5S RNA in the ribosome where it forms part of the central protuberance. The chain is Large ribosomal subunit protein bL25 from Methylococcus capsulatus (strain ATCC 33009 / NCIMB 11132 / Bath).